The following is a 267-amino-acid chain: MFIVSDGTGITAETFSHSILAQFEMRFRKVRMPFVDTPEKAHIAVGKINEAFHNEGVPPIVFTTLVNQEANKALRRAKAMILDMFQTFIEPLEKELGLKSTHAIGRFHQNADTEAYKNRIEAINFSLAHDDGQSHKNLEEADVILVGVSRSGKTPTSLYLAMQYGLKAANYPLIPDDFERGRLPSALYAFKPKIFGLSIDPQRLTEIRNERRPGSKYAALENCRYEVNEAEAMMRREGIKWLSSTHKSIEEIATTILQEIKVDRDNY.

147–154 is a binding site for ADP; that stretch reads GVSRSGKT.

Belongs to the pyruvate, phosphate/water dikinase regulatory protein family. PSRP subfamily.

The catalysed reaction is [pyruvate, water dikinase] + ADP = [pyruvate, water dikinase]-phosphate + AMP + H(+). The enzyme catalyses [pyruvate, water dikinase]-phosphate + phosphate + H(+) = [pyruvate, water dikinase] + diphosphate. Bifunctional serine/threonine kinase and phosphorylase involved in the regulation of the phosphoenolpyruvate synthase (PEPS) by catalyzing its phosphorylation/dephosphorylation. This is Putative phosphoenolpyruvate synthase regulatory protein from Cupriavidus necator (strain ATCC 17699 / DSM 428 / KCTC 22496 / NCIMB 10442 / H16 / Stanier 337) (Ralstonia eutropha).